The chain runs to 110 residues: Protein C-ets-2 (110 aa).

The segment at residues 1-84 (SGPIQLWQFL…AGKRYVYRFV (84 aa)) is a DNA-binding region (ETS).

Belongs to the ETS family.

Its subcellular location is the nucleus. Probable transcription factor. This is Protein C-ets-2 (ETS-2) from Lytechinus variegatus (Green sea urchin).